Reading from the N-terminus, the 119-residue chain is Small ribosomal subunit protein bS16 (119 aa).

Belongs to the bacterial ribosomal protein bS16 family.

This is Small ribosomal subunit protein bS16 from Chlamydia felis (strain Fe/C-56) (Chlamydophila felis).